The sequence spans 67 residues: Kappa-conotoxin-like 2 (67 aa).

The first 26 residues, 1–26, serve as a signal peptide directing secretion; it reads MMFRLTSVSCFLLVIACLNLFQVVLT. 4 cysteine pairs are disulfide-bonded: Cys-29/Cys-43, Cys-36/Cys-48, Cys-42/Cys-51, and Cys-47/Cys-55. Phe-59 carries the phenylalanine amide modification. The propeptide occupies 63-67; it reads ATFQE.

It belongs to the conotoxin I2 superfamily. In terms of tissue distribution, expressed by the venom duct.

It localises to the secreted. Functionally, inhibits the vertebrate voltage-gated potassium channels Kv1.1/KCNA1 and Kv1.3/KCNA3. The polypeptide is Kappa-conotoxin-like 2 (Conus vexillum (Flag cone)).